The primary structure comprises 288 residues: Homoserine kinase (288 aa).

Residue 79–89 (PPARGLGSSSA) coordinates ATP.

It belongs to the GHMP kinase family. Homoserine kinase subfamily.

It localises to the cytoplasm. The enzyme catalyses L-homoserine + ATP = O-phospho-L-homoserine + ADP + H(+). It functions in the pathway amino-acid biosynthesis; L-threonine biosynthesis; L-threonine from L-aspartate: step 4/5. In terms of biological role, catalyzes the ATP-dependent phosphorylation of L-homoserine to L-homoserine phosphate. The chain is Homoserine kinase from Listeria monocytogenes serotype 4a (strain HCC23).